The primary structure comprises 386 residues: Orphan methyltransferase M.SssI (386 aa).

Positions Leu11 to Gly386 constitute an SAM-dependent MTase C5-type domain. Residue Cys141 is part of the active site.

This sequence belongs to the class I-like SAM-binding methyltransferase superfamily. C5-methyltransferase family.

The catalysed reaction is a 2'-deoxycytidine in DNA + S-adenosyl-L-methionine = a 5-methyl-2'-deoxycytidine in DNA + S-adenosyl-L-homocysteine + H(+). Functionally, this de novo methylase acts completely and exclusively on CG residues in DNA; methylates unmethylated and hemi-methylated DNA. The polypeptide is Orphan methyltransferase M.SssI (sssIM) (Spiroplasma monobiae (strain ATCC 33825 / MQ-1)).